We begin with the raw amino-acid sequence, 285 residues long: Diphthine methyl ester synthase (285 aa).

S-adenosyl-L-methionine is bound by residues Leu9, Asp84, Gly87, 112–113, and Leu163; that span reads SI. Residue Ser171 is modified to Phosphoserine. Residues Val225 and His250 each coordinate S-adenosyl-L-methionine.

This sequence belongs to the diphthine synthase family.

The enzyme catalyses 2-[(3S)-amino-3-carboxypropyl]-L-histidyl-[translation elongation factor 2] + 4 S-adenosyl-L-methionine = diphthine methyl ester-[translation elongation factor 2] + 4 S-adenosyl-L-homocysteine + 3 H(+). It participates in protein modification; peptidyl-diphthamide biosynthesis. Its function is as follows. S-adenosyl-L-methionine-dependent methyltransferase that catalyzes four methylations of the modified target histidine residue in translation elongation factor 2 (EF-2), to form an intermediate called diphthine methyl ester. The four successive methylation reactions represent the second step of diphthamide biosynthesis. This is Diphthine methyl ester synthase (DPH5) from Homo sapiens (Human).